The primary structure comprises 471 residues: UDP-N-acetylmuramate--L-alanine ligase (471 aa).

122–128 (GTHGKTT) contacts ATP.

Belongs to the MurCDEF family.

It localises to the cytoplasm. The enzyme catalyses UDP-N-acetyl-alpha-D-muramate + L-alanine + ATP = UDP-N-acetyl-alpha-D-muramoyl-L-alanine + ADP + phosphate + H(+). It functions in the pathway cell wall biogenesis; peptidoglycan biosynthesis. Cell wall formation. The chain is UDP-N-acetylmuramate--L-alanine ligase from Cutibacterium acnes (strain DSM 16379 / KPA171202) (Propionibacterium acnes).